The primary structure comprises 95 residues: Parvalbumin beta 3 (95 aa).

N-acetylalanine is present on Ala1. EF-hand domains are found at residues 39–66 (FFAIIDQDHSGFIEEDELKLFLQTFSAG) and 77–95 (DVDGDGMIGVDEFVALVKA). Ca(2+) is bound by residues Asp44, Asp46, Ser48, Phe50, Glu52, Glu55, Asp77, Asp79, Asp81, Met83, and Glu88.

The protein belongs to the parvalbumin family.

Functionally, in muscle, parvalbumin is thought to be involved in relaxation after contraction. It binds two calcium ions. The sequence is that of Parvalbumin beta 3 from Merluccius paradoxus (Deep-water Cape hake).